We begin with the raw amino-acid sequence, 218 residues long: Small ribosomal subunit protein uS3 (218 aa).

A KH type-2 domain is found at 38-106 (IREYINKRLQ…REHINIVEIK (69 aa)).

The protein belongs to the universal ribosomal protein uS3 family. As to quaternary structure, part of the 30S ribosomal subunit. Forms a tight complex with proteins S10 and S14.

In terms of biological role, binds the lower part of the 30S subunit head. Binds mRNA in the 70S ribosome, positioning it for translation. The sequence is that of Small ribosomal subunit protein uS3 from Geobacillus stearothermophilus (Bacillus stearothermophilus).